We begin with the raw amino-acid sequence, 350 residues long: Zinc finger protein 367 (350 aa).

Residues 104 to 151 (SGLRGRGAPPPAASASAAASGGEDEEEASSPDSGHLKDGIRRGRPRAD) are disordered. Residues 137–151 (GHLKDGIRRGRPRAD) show a composition bias toward basic and acidic residues. 2 C2H2-type zinc fingers span residues 167 to 189 (IRCN…KRTH) and 195 to 219 (YLCD…QRLH). A disordered region spans residues 290–327 (KGKLVQKADQEQQDPLEYLQSDEEDDEKRGAQRRLQEQ). Positions 308–342 (LQSDEEDDEKRGAQRRLQEQRERLHGALALIELAN) form a coiled coil. Ser-310 bears the Phosphoserine mark. Residues 316 to 327 (EKRGAQRRLQEQ) show a composition bias toward basic and acidic residues.

Belongs to the krueppel C2H2-type zinc-finger protein family.

Its subcellular location is the nucleus. Its function is as follows. Transcriptional activator. Isoform 1 may be involved in transcriptional activation of erythroid genes. The sequence is that of Zinc finger protein 367 (ZNF367) from Homo sapiens (Human).